The primary structure comprises 1080 residues: Putative bifunctional amine oxidase DDB_G0291301 (1080 aa).

The tract at residues 1 to 450 (MREFLKDDYD…TIAKSTVPTN (450 aa)) is putative sarcosine oxidase. 10 to 40 (DVIVCGGGPVGLATAYRCAKAGKKVLCLEKS) contacts FAD. Residues 445-464 (STVPTNQSSNPDGASSTAPT) form a disordered region. The interval 450 to 1080 (NQSSNPDGAS…NTAASIGGLK (631 aa)) is putative L-amino-acid oxidase. A helical membrane pass occupies residues 508 to 528 (VGIIGAGMAGLYAAMILQDLG). FAD-binding positions include Glu535, Arg544, and 563 to 564 (GA). Position 886 (Tyr886) interacts with substrate. Residues Glu978 and 987 to 990 (VIGS) each bind FAD.

This sequence in the N-terminal section; belongs to the MSOX/MTOX family. It in the C-terminal section; belongs to the flavin monoamine oxidase family. It depends on FAD as a cofactor.

It localises to the membrane. The enzyme catalyses sarcosine + O2 + H2O = formaldehyde + glycine + H2O2. It carries out the reaction L-pipecolate + O2 = L-1-piperideine-6-carboxylate + H2O2 + H(+). The catalysed reaction is an L-alpha-amino acid + O2 + H2O = a 2-oxocarboxylate + H2O2 + NH4(+). Catalyzes an oxidative deamination of predominantly hydrophobic and aromatic L-amino acids. Metabolizes sarcosine, L-pipecolic acid and L-proline. This is Putative bifunctional amine oxidase DDB_G0291301 from Dictyostelium discoideum (Social amoeba).